Reading from the N-terminus, the 97-residue chain is Small ribosomal subunit protein bS20 (97 aa).

It belongs to the bacterial ribosomal protein bS20 family.

Functionally, binds directly to 16S ribosomal RNA. The sequence is that of Small ribosomal subunit protein bS20 from Prochlorococcus marinus (strain MIT 9515).